Reading from the N-terminus, the 291-residue chain is Nucleotide-binding protein PPA0813 (291 aa).

17-24 (GISGAGRR) is a binding site for ATP. 66-69 (DVRS) is a binding site for GTP.

The protein belongs to the RapZ-like family.

In terms of biological role, displays ATPase and GTPase activities. This chain is Nucleotide-binding protein PPA0813, found in Cutibacterium acnes (strain DSM 16379 / KPA171202) (Propionibacterium acnes).